Here is a 241-residue protein sequence, read N- to C-terminus: Octanoyltransferase (241 aa).

In terms of domain architecture, BPL/LPL catalytic spans 38–227; the sequence is AGGPDTLLLL…AVCNALDGAL (190 aa). Residues 85 to 92, 157 to 159, and 170 to 172 each bind substrate; these read RGGKITWH, AIG, and GFA. C188 (acyl-thioester intermediate) is an active-site residue.

It belongs to the LipB family.

The protein localises to the cytoplasm. It carries out the reaction octanoyl-[ACP] + L-lysyl-[protein] = N(6)-octanoyl-L-lysyl-[protein] + holo-[ACP] + H(+). It functions in the pathway protein modification; protein lipoylation via endogenous pathway; protein N(6)-(lipoyl)lysine from octanoyl-[acyl-carrier-protein]: step 1/2. Functionally, catalyzes the transfer of endogenously produced octanoic acid from octanoyl-acyl-carrier-protein onto the lipoyl domains of lipoate-dependent enzymes. Lipoyl-ACP can also act as a substrate although octanoyl-ACP is likely to be the physiological substrate. The chain is Octanoyltransferase from Mycobacterium ulcerans (strain Agy99).